The following is a 421-amino-acid chain: UDP-N-acetylglucosamine 1-carboxyvinyltransferase (421 aa).

22-23 (KN) contributes to the phosphoenolpyruvate binding site. A UDP-N-acetyl-alpha-D-glucosamine-binding site is contributed by arginine 93. Cysteine 117 functions as the Proton donor in the catalytic mechanism. A 2-(S-cysteinyl)pyruvic acid O-phosphothioketal modification is found at cysteine 117. UDP-N-acetyl-alpha-D-glucosamine is bound by residues 122–126 (RPVDL), aspartate 308, and valine 330.

The protein belongs to the EPSP synthase family. MurA subfamily.

It localises to the cytoplasm. The enzyme catalyses phosphoenolpyruvate + UDP-N-acetyl-alpha-D-glucosamine = UDP-N-acetyl-3-O-(1-carboxyvinyl)-alpha-D-glucosamine + phosphate. It functions in the pathway cell wall biogenesis; peptidoglycan biosynthesis. Its function is as follows. Cell wall formation. Adds enolpyruvyl to UDP-N-acetylglucosamine. The sequence is that of UDP-N-acetylglucosamine 1-carboxyvinyltransferase from Ectopseudomonas mendocina (strain ymp) (Pseudomonas mendocina).